Consider the following 479-residue polypeptide: MNTILAQQIANEGGVEAWMIAQQHKSLLRFLTCGSVDDGKSTLIGRLLHDTLQIYEDQLSSLHNDSKRHGTQGEKLDLALLVDGLQAEREQGITIDVAYRYFSTERRKFIIADTPGHEQYTRNMATGASTCDLAILLIDARKGVLDQTRRHSFISTLLGIKHLVVAINKMDLVDYREETFARIREDYLTFAEQLPGDLDIRFVPLSALEGDNVAAQSANMRWYSGPTLLEVLETVDIQRAVDRQPMRFPVQYVNRPNLDFRGYAGTLASGSVKVGERIKVLPSGVESSVARIVTFDGDKEEACAGEAITLVLNDDIDISRGDLLLAANETLAPARHAAIDVVWMAEQPLAPGQSYDVKLAGKKTRARIEAIRYQIDINNLTQRDVESLPLNGIGLVEMTFDEPLALDIYQQNPVTGGLIFIDRLSNVTVGAGMVRELDERGATPPVEYSAFELELNALVRRHFPHWDARDLLGDKHGAA.

Residues 25–239 (KSLLRFLTCG…EVLETVDIQR (215 aa)) form the tr-type G domain. Residues 34–41 (GSVDDGKS) form a G1 region. 34–41 (GSVDDGKS) is a GTP binding site. The tract at residues 92–96 (GITID) is G2. The segment at 113–116 (DTPG) is G3. Residues 113–117 (DTPGH) and 168–171 (NKMD) each bind GTP. The segment at 168 to 171 (NKMD) is G4. A G5 region spans residues 206 to 208 (SAL).

Belongs to the TRAFAC class translation factor GTPase superfamily. Classic translation factor GTPase family. CysN/NodQ subfamily. Heterodimer composed of CysD, the smaller subunit, and CysN.

It catalyses the reaction sulfate + ATP + H(+) = adenosine 5'-phosphosulfate + diphosphate. It functions in the pathway sulfur metabolism; hydrogen sulfide biosynthesis; sulfite from sulfate: step 1/3. In terms of biological role, with CysD forms the ATP sulfurylase (ATPS) that catalyzes the adenylation of sulfate producing adenosine 5'-phosphosulfate (APS) and diphosphate, the first enzymatic step in sulfur assimilation pathway. APS synthesis involves the formation of a high-energy phosphoric-sulfuric acid anhydride bond driven by GTP hydrolysis by CysN coupled to ATP hydrolysis by CysD. This is Sulfate adenylyltransferase subunit 1 from Salmonella typhimurium (strain LT2 / SGSC1412 / ATCC 700720).